Consider the following 1505-residue polypeptide: Phosphatidylinositol 3-kinase C2 domain-containing subunit gamma (1505 aa).

A disordered region spans residues 1 to 32; the sequence is MAYNWQTEPNRAEPQEGGHDHQQCHHADQHLS. The segment covering 10 to 31 has biased composition (basic and acidic residues); the sequence is NRAEPQEGGHDHQQCHHADQHL. Positions 278-370 constitute a PI3K-RBD domain; that stretch reads PSRLFADTQF…IQLHLQRSRD (93 aa). The C2 PI3K-type domain occupies 540-688; that stretch reads LHSHLSFTVC…TPLTLQIDFP (149 aa). In terms of domain architecture, PIK helical spans 703–879; that stretch reads RTDHQEPPRE…QELLAALQFC (177 aa). In terms of domain architecture, PI3K/PI4K catalytic spans 948–1226; sequence DRDACSYFTS…KIKQSLECFP (279 aa). The G-loop stretch occupies residues 954 to 960; it reads YFTSNAL. Residues 1090–1098 form a catalytic loop region; that stretch reads GVCDRHNDN. An activation loop region spans residues 1109–1135; the sequence is HIDFGKFLGHAQTFGGIKRDRAPFIFT. The PX domain maps to 1259 to 1371; sequence LNKTRTIQRV…SFFLSEHIQQ (113 aa). Positions 1384-1505 constitute a C2 domain; sequence HSPDKSPQVQ…KWYPLGNSII (122 aa).

It belongs to the PI3/PI4-kinase family. As to expression, predominantly expressed in normal liver. High levels also found in regenerating liver. Very low levels found in heart and testis.

It localises to the membrane. The catalysed reaction is a 1,2-diacyl-sn-glycero-3-phospho-(1D-myo-inositol) + ATP = a 1,2-diacyl-sn-glycero-3-phospho-(1D-myo-inositol-3-phosphate) + ADP + H(+). The enzyme catalyses a 1,2-diacyl-sn-glycero-3-phospho-(1D-myo-inositol 4-phosphate) + ATP = a 1,2-diacyl-sn-glycero-3-phospho-(1D-myo-inositol-3,4-bisphosphate) + ADP + H(+). In terms of biological role, generates phosphatidylinositol 3-phosphate (PtdIns3P) and phosphatidylinositol 3,4-bisphosphate (PtdIns(3,4)P2) that act as second messengers. May play a role in SDF1A-stimulated chemotaxis. The protein is Phosphatidylinositol 3-kinase C2 domain-containing subunit gamma (Pik3c2g) of Rattus norvegicus (Rat).